An 87-amino-acid polypeptide reads, in one-letter code: Large ribosomal subunit protein bL27 (87 aa).

Residues methionine 1 to valine 23 are disordered. The span at threonine 7 to glutamine 19 shows a compositional bias: polar residues.

The protein belongs to the bacterial ribosomal protein bL27 family.

This is Large ribosomal subunit protein bL27 (rpmA) from Synechocystis sp. (strain ATCC 27184 / PCC 6803 / Kazusa).